A 420-amino-acid polypeptide reads, in one-letter code: Tol-Pal system protein TolB (420 aa).

Positions Met-1 to Ala-21 are cleaved as a signal peptide.

The protein belongs to the TolB family. The Tol-Pal system is composed of five core proteins: the inner membrane proteins TolA, TolQ and TolR, the periplasmic protein TolB and the outer membrane protein Pal. They form a network linking the inner and outer membranes and the peptidoglycan layer.

The protein resides in the periplasm. Functionally, part of the Tol-Pal system, which plays a role in outer membrane invagination during cell division and is important for maintaining outer membrane integrity. The polypeptide is Tol-Pal system protein TolB (Wolbachia sp. subsp. Drosophila simulans (strain wRi)).